Consider the following 28-residue polypeptide: Short cationic peptide-1a (28 aa).

The residue at position 28 (Glu-28) is a Glutamic acid 1-amide.

As to expression, expressed by the venom gland.

The protein localises to the secreted. The chain is Short cationic peptide-1a from Cupiennius salei (American wandering spider).